We begin with the raw amino-acid sequence, 29 residues long: Cytochrome b6-f complex subunit 8 (29 aa).

The helical transmembrane segment at isoleucine 3–valine 23 threads the bilayer.

This sequence belongs to the PetN family. As to quaternary structure, the 4 large subunits of the cytochrome b6-f complex are cytochrome b6, subunit IV (17 kDa polypeptide, PetD), cytochrome f and the Rieske protein, while the 4 small subunits are PetG, PetL, PetM and PetN. The complex functions as a dimer.

It is found in the plastid. Its subcellular location is the chloroplast thylakoid membrane. Its function is as follows. Component of the cytochrome b6-f complex, which mediates electron transfer between photosystem II (PSII) and photosystem I (PSI), cyclic electron flow around PSI, and state transitions. The polypeptide is Cytochrome b6-f complex subunit 8 (Angiopteris evecta (Mule's foot fern)).